The primary structure comprises 269 residues: Chymotrypsin-like elastase family member 2B (269 aa).

The signal sequence occupies residues 1–16 (MIRTLLLSTLVAGALS). The propeptide at 17–28 (CGVSTYAPDMSR) is activation peptide. The Peptidase S1 domain maps to 29 to 267 (MLGGEEARPN…YNDWINSVIA (239 aa)). Residues C58 and C74 are joined by a disulfide bond. Active-site charge relay system residues include H73 and D121. 3 disulfides stabilise this stretch: C155–C222, C186–C202, and C212–C243. Catalysis depends on S216, which acts as the Charge relay system.

It belongs to the peptidase S1 family. Elastase subfamily. In terms of tissue distribution, pancreas.

The protein localises to the secreted. It carries out the reaction Preferential cleavage: Leu-|-Xaa, Met-|-Xaa and Phe-|-Xaa. Hydrolyzes elastin.. In terms of biological role, acts upon elastin. The protein is Chymotrypsin-like elastase family member 2B (CELA2B) of Homo sapiens (Human).